The following is a 393-amino-acid chain: Formate-dependent phosphoribosylglycinamide formyltransferase (393 aa).

Residues 22-23 and Glu82 each bind N(1)-(5-phospho-beta-D-ribosyl)glycinamide; that span reads EL. ATP is bound by residues Arg114, Lys155, 160–165, 195–198, and Glu203; these read SSGKGQ and EGLV. One can recognise an ATP-grasp domain in the interval 119–308; that stretch reads RLAAETLQLP…EFALHVRAFL (190 aa). The Mg(2+) site is built by Glu267 and Glu279. N(1)-(5-phospho-beta-D-ribosyl)glycinamide is bound by residues Asp286, Lys355, and 362–363; that span reads RR.

The protein belongs to the PurK/PurT family. In terms of assembly, homodimer.

It carries out the reaction N(1)-(5-phospho-beta-D-ribosyl)glycinamide + formate + ATP = N(2)-formyl-N(1)-(5-phospho-beta-D-ribosyl)glycinamide + ADP + phosphate + H(+). It participates in purine metabolism; IMP biosynthesis via de novo pathway; N(2)-formyl-N(1)-(5-phospho-D-ribosyl)glycinamide from N(1)-(5-phospho-D-ribosyl)glycinamide (formate route): step 1/1. In terms of biological role, involved in the de novo purine biosynthesis. Catalyzes the transfer of formate to 5-phospho-ribosyl-glycinamide (GAR), producing 5-phospho-ribosyl-N-formylglycinamide (FGAR). Formate is provided by PurU via hydrolysis of 10-formyl-tetrahydrofolate. This is Formate-dependent phosphoribosylglycinamide formyltransferase from Yersinia pseudotuberculosis serotype O:3 (strain YPIII).